We begin with the raw amino-acid sequence, 111 residues long: Ribonuclease P protein component (111 aa).

This sequence belongs to the RnpA family. Consists of a catalytic RNA component (M1 or rnpB) and a protein subunit.

The enzyme catalyses Endonucleolytic cleavage of RNA, removing 5'-extranucleotides from tRNA precursor.. RNaseP catalyzes the removal of the 5'-leader sequence from pre-tRNA to produce the mature 5'-terminus. It can also cleave other RNA substrates such as 4.5S RNA. The protein component plays an auxiliary but essential role in vivo by binding to the 5'-leader sequence and broadening the substrate specificity of the ribozyme. This chain is Ribonuclease P protein component, found in Clostridium botulinum (strain 657 / Type Ba4).